The sequence spans 597 residues: MDELPNGNGAAPLKRGRGRRRRQPQPRGASVLALPLRPRKVRRHRKSAASRVAALRARALLSEDSDSNVESVRGKRERPAELPEASRSAEPRPVPVRPRPASATLPRRVEGRAALSRNLGKPAPLPGSHVDDPERPWDSPLQQVLAELNGIPSSRRRAARLFEWLLAPLPPDHFYRRLWEREAVLVRRQDHSYYEGLFSTSDLDWMLRYEDVHFGQHLDAARYIDGRRETLNPPGRALPAAAWSLYQAGCSLRLLCPQAFSPTVWQFLAVLQEQFGSMAGSNVYLTPPNSQGFAPHYDDIEAFVLQLEGRKLWRVYRPRDPSEELALTSSPNFSQEDLGEPVLQTVLEPGDLLYFPRGFIHQAECQDGVHSLHLTLSTYQRNTWGDFLEAVLPLAMQAAIEENVEFRRGLPRDFMDYMGAQHSDSKDPRRTAFMEKVRVLVARLGHFAPVDAVADQRAKDFIHDSLPPVLTDRERALSVHGLPIRWEAGEPVNVGAQLTTETQVHMLQDGIARLVGEGGRLFLYYTVENSRVYHLEEPKCLEIYPQQADAMELLLRSYPEFVRVGDLPCDSVEDQLSLATMLYDKGLLLTKTPLVLS.

N-acetylmethionine is present on methionine 1. The disordered stretch occupies residues 1–138; the sequence is MDELPNGNGA…HVDDPERPWD (138 aa). Basic residues-rich tracts occupy residues 14-24 and 37-48; these read KRGRGRRRRQP and RPRKVRRHRKSA. Residues 49–62 show a composition bias toward low complexity; that stretch reads ASRVAALRARALLS. Phosphoserine is present on residues serine 62 and serine 65. Positions 72–81 are enriched in basic and acidic residues; sequence VRGKRERPAE. Serine 86 is modified (phosphoserine). Residues 250–395 enclose the JmjC domain; sequence CSLRLLCPQA…DFLEAVLPLA (146 aa). Fe cation is bound by residues histidine 296, aspartate 298, and histidine 361.

It belongs to the ROX family. NO66 subfamily. As to quaternary structure, interacts with SP7/OSX; the interaction is direct. Interacts with MYC. Interacts with PHF19; leading to its recruitment to H3K36me3 sites. It depends on Fe(2+) as a cofactor.

It localises to the nucleus. The protein resides in the nucleolus. It is found in the nucleoplasm. The catalysed reaction is N(6),N(6)-dimethyl-L-lysyl(36)-[histone H3] + 2 2-oxoglutarate + 2 O2 = L-lysyl(36)-[histone H3] + 2 formaldehyde + 2 succinate + 2 CO2. The enzyme catalyses N(6)-methyl-L-lysyl-[protein] + 2-oxoglutarate + O2 = L-lysyl-[protein] + formaldehyde + succinate + CO2. It carries out the reaction L-histidyl-[protein] + 2-oxoglutarate + O2 = (3S)-3-hydroxy-L-histidyl-[protein] + succinate + CO2. Its function is as follows. Oxygenase that can act as both a histone lysine demethylase and a ribosomal histidine hydroxylase. Specifically demethylates 'Lys-4' (H3K4me) and 'Lys-36' (H3K36me) of histone H3, thereby playing a central role in histone code. Preferentially demethylates trimethylated H3 'Lys-4' (H3K4me3) and monomethylated H3 'Lys-4' (H3K4me1) residues, while it has weaker activity for dimethylated H3 'Lys-36' (H3K36me2). Acts as a regulator of osteoblast differentiation via its interaction with SP7/OSX by demethylating H3K4me and H3K36me, thereby inhibiting SP7/OSX-mediated promoter activation. Also catalyzes demethylation of non-histone proteins, such as CGAS: demethylation of monomethylated CGAS promotes interaction between CGAS and PARP1, followed by PARP1 inactivation. Also catalyzes the hydroxylation of 60S ribosomal protein L8 on 'His-216', thereby playing a role in ribosome biogenesis. Participates in MYC-induced transcriptional activation. The polypeptide is Ribosomal oxygenase 1 (Rattus norvegicus (Rat)).